Consider the following 341-residue polypeptide: Methionine import ATP-binding protein MetN 3 (341 aa).

One can recognise an ABC transporter domain in the interval 2 to 241 (IEFQNVTKTF…PSHETTKRFI (240 aa)). 38–45 (GFSGAGKS) serves as a coordination point for ATP.

Belongs to the ABC transporter superfamily. Methionine importer (TC 3.A.1.24) family. In terms of assembly, the complex is composed of two ATP-binding proteins (MetN), two transmembrane proteins (MetI) and a solute-binding protein (MetQ).

The protein localises to the cell membrane. The catalysed reaction is L-methionine(out) + ATP + H2O = L-methionine(in) + ADP + phosphate + H(+). The enzyme catalyses D-methionine(out) + ATP + H2O = D-methionine(in) + ADP + phosphate + H(+). Its function is as follows. Part of the ABC transporter complex MetNIQ involved in methionine import. Responsible for energy coupling to the transport system. In Oceanobacillus iheyensis (strain DSM 14371 / CIP 107618 / JCM 11309 / KCTC 3954 / HTE831), this protein is Methionine import ATP-binding protein MetN 3.